Reading from the N-terminus, the 118-residue chain is NADH-quinone oxidoreductase subunit A (118 aa).

Transmembrane regions (helical) follow at residues 6–26 (LPVL…LLMG), 64–84 (AILF…AVVF), and 87–107 (IGMT…VGFI).

It belongs to the complex I subunit 3 family. NDH-1 is composed of 14 different subunits. Subunits NuoA, H, J, K, L, M, N constitute the membrane sector of the complex.

Its subcellular location is the cell inner membrane. It catalyses the reaction a quinone + NADH + 5 H(+)(in) = a quinol + NAD(+) + 4 H(+)(out). Functionally, NDH-1 shuttles electrons from NADH, via FMN and iron-sulfur (Fe-S) centers, to quinones in the respiratory chain. The immediate electron acceptor for the enzyme in this species is believed to be ubiquinone. Couples the redox reaction to proton translocation (for every two electrons transferred, four hydrogen ions are translocated across the cytoplasmic membrane), and thus conserves the redox energy in a proton gradient. The sequence is that of NADH-quinone oxidoreductase subunit A from Acidithiobacillus ferrooxidans (strain ATCC 53993 / BNL-5-31) (Leptospirillum ferrooxidans (ATCC 53993)).